The following is a 197-amino-acid chain: Small ribosomal subunit protein eS1 (197 aa).

This sequence belongs to the eukaryotic ribosomal protein eS1 family.

This is Small ribosomal subunit protein eS1 from Sulfolobus acidocaldarius (strain ATCC 33909 / DSM 639 / JCM 8929 / NBRC 15157 / NCIMB 11770).